Consider the following 567-residue polypeptide: Dihydroxy-acid dehydratase (567 aa).

Cys52 lines the [2Fe-2S] cluster pocket. Residue Asp84 participates in Mg(2+) binding. Cys125 lines the [2Fe-2S] cluster pocket. 2 residues coordinate Mg(2+): Asp126 and Lys127. Lys127 carries the N6-carboxylysine modification. Cys197 contacts [2Fe-2S] cluster. Position 448 (Glu448) interacts with Mg(2+). Ser474 serves as the catalytic Proton acceptor.

This sequence belongs to the IlvD/Edd family. As to quaternary structure, homodimer. [2Fe-2S] cluster is required as a cofactor. Mg(2+) serves as cofactor.

It carries out the reaction (2R)-2,3-dihydroxy-3-methylbutanoate = 3-methyl-2-oxobutanoate + H2O. It catalyses the reaction (2R,3R)-2,3-dihydroxy-3-methylpentanoate = (S)-3-methyl-2-oxopentanoate + H2O. Its pathway is amino-acid biosynthesis; L-isoleucine biosynthesis; L-isoleucine from 2-oxobutanoate: step 3/4. It functions in the pathway amino-acid biosynthesis; L-valine biosynthesis; L-valine from pyruvate: step 3/4. Functionally, functions in the biosynthesis of branched-chain amino acids. Catalyzes the dehydration of (2R,3R)-2,3-dihydroxy-3-methylpentanoate (2,3-dihydroxy-3-methylvalerate) into 2-oxo-3-methylpentanoate (2-oxo-3-methylvalerate) and of (2R)-2,3-dihydroxy-3-methylbutanoate (2,3-dihydroxyisovalerate) into 2-oxo-3-methylbutanoate (2-oxoisovalerate), the penultimate precursor to L-isoleucine and L-valine, respectively. The protein is Dihydroxy-acid dehydratase of Streptococcus pneumoniae serotype 2 (strain D39 / NCTC 7466).